A 72-amino-acid polypeptide reads, in one-letter code: UPF0154 protein BH2350 (72 aa).

Residues 3–23 (WMILLWITLGIVIGIAIGFFI) traverse the membrane as a helical segment.

The protein belongs to the UPF0154 family.

It localises to the membrane. This is UPF0154 protein BH2350 from Halalkalibacterium halodurans (strain ATCC BAA-125 / DSM 18197 / FERM 7344 / JCM 9153 / C-125) (Bacillus halodurans).